Consider the following 207-residue polypeptide: Cytochrome c biogenesis ATP-binding export protein CcmA (207 aa).

An ABC transporter domain is found at 2 to 204; that stretch reads LEVKNLTAIR…NPKLRKIRLG (203 aa). Position 34-41 (34-41) interacts with ATP; the sequence is GRNGTGKT.

This sequence belongs to the ABC transporter superfamily. CcmA exporter (TC 3.A.1.107) family. In terms of assembly, the complex is composed of two ATP-binding proteins (CcmA) and two transmembrane proteins (CcmB).

Its subcellular location is the cell inner membrane. It catalyses the reaction heme b(in) + ATP + H2O = heme b(out) + ADP + phosphate + H(+). Its function is as follows. Part of the ABC transporter complex CcmAB involved in the biogenesis of c-type cytochromes; once thought to export heme, this seems not to be the case, but its exact role is uncertain. Responsible for energy coupling to the transport system. The chain is Cytochrome c biogenesis ATP-binding export protein CcmA from Vibrio cholerae serotype O1 (strain ATCC 39315 / El Tor Inaba N16961).